We begin with the raw amino-acid sequence, 557 residues long: Copine-7 (557 aa).

2 C2 domains span residues 1-128 (MSGD…TRPL) and 135-263 (NAGK…AQWD). Residues Asp-168, Asp-174, Asp-230, Asp-232, and Asp-238 each contribute to the Ca(2+) site. The region spanning 306 to 505 (HCTVAIDFTA…PALRDIVQFV (200 aa)) is the VWFA domain.

This sequence belongs to the copine family. The cofactor is Ca(2+).

The protein localises to the cytoplasm. It localises to the nucleus. The protein resides in the cell membrane. Calcium-dependent phospholipid-binding protein that may play a role in calcium-mediated intracellular processes. This Mus musculus (Mouse) protein is Copine-7.